The sequence spans 355 residues: D-alanine--D-alanine ligase (355 aa).

Positions 143 to 350 (KIIFSNLKIP…IEQLVAKLVD (208 aa)) constitute an ATP-grasp domain. 178–233 (LKKLNFPVFVKPSNSGSSLGISKVINKSEIIPALEKARGIDPSILIEEGLEVREIE) is an ATP binding site. Residues Asp303, Glu317, and Asn319 each coordinate Mg(2+).

It belongs to the D-alanine--D-alanine ligase family. Requires Mg(2+) as cofactor. Mn(2+) serves as cofactor.

The protein resides in the cytoplasm. It carries out the reaction 2 D-alanine + ATP = D-alanyl-D-alanine + ADP + phosphate + H(+). Its pathway is cell wall biogenesis; peptidoglycan biosynthesis. Its function is as follows. Cell wall formation. The chain is D-alanine--D-alanine ligase from Prochlorococcus marinus (strain AS9601).